A 1157-amino-acid chain; its full sequence is Peroxisomal ATPase PEX1 (1157 aa).

2 disordered regions span residues 187–221 (SISS…NNGE) and 1135–1157 (SGRD…STLM). The segment covering 205–217 (SSTSTATGRRSVT) has biased composition (low complexity).

The protein belongs to the AAA ATPase family. In terms of assembly, interacts with PEX6; forming the PEX1-PEX6 AAA ATPase complex, which is composed of a heterohexamer formed by a trimer of PEX1-PEX6 dimers.

The protein localises to the membrane. The catalysed reaction is ATP + H2O = ADP + phosphate + H(+). Functionally, component of the PEX1-PEX6 AAA ATPase complex involved in peroxisome biosynthesis. The complex acts as a protein dislocase complex that mediates the ATP-dependent extraction of the PEX5 receptor from peroxisomal membranes, an essential step for PEX5 recycling. Specifically recognizes PEX5 monoubiquitinated at 'Cys-6', and pulls it out of the peroxisome lumen through the PEX2-PEX10-PEX12 retrotranslocation channel. Extraction by the PEX1-PEX6 AAA ATPase complex is accompanied by unfolding of the TPR repeats and release of bound cargo from PEX5. In Komagataella pastoris (Yeast), this protein is Peroxisomal ATPase PEX1.